The sequence spans 168 residues: Siroheme decarboxylase NirH subunit (168 aa).

The protein belongs to the Ahb/Nir family. As to quaternary structure, probably forms a complex composed of NirD, NirL, NirG and NirH. All proteins are required for the total conversion of siroheme to didecarboxysiroheme.

The catalysed reaction is siroheme + 2 H(+) = 12,18-didecarboxysiroheme + 2 CO2. The protein operates within porphyrin-containing compound metabolism. Involved in heme d1 biosynthesis. Catalyzes the decarboxylation of siroheme into didecarboxysiroheme. This chain is Siroheme decarboxylase NirH subunit, found in Stutzerimonas stutzeri (Pseudomonas stutzeri).